Consider the following 328-residue polypeptide: Methionyl-tRNA formyltransferase (328 aa).

Position 121 to 124 (121 to 124 (SLLP)) interacts with (6S)-5,6,7,8-tetrahydrofolate.

The protein belongs to the Fmt family.

The catalysed reaction is L-methionyl-tRNA(fMet) + (6R)-10-formyltetrahydrofolate = N-formyl-L-methionyl-tRNA(fMet) + (6S)-5,6,7,8-tetrahydrofolate + H(+). Its function is as follows. Attaches a formyl group to the free amino group of methionyl-tRNA(fMet). The formyl group appears to play a dual role in the initiator identity of N-formylmethionyl-tRNA by promoting its recognition by IF2 and preventing the misappropriation of this tRNA by the elongation apparatus. In Paraburkholderia xenovorans (strain LB400), this protein is Methionyl-tRNA formyltransferase.